The sequence spans 168 residues: MFPARWHNYLQCGQVIKDSNLICFKTPLRPELFAYVTSEEDVWTAEQIVKQNPSIGAIIDLTNTSKYYDGVHFLRAGLLYKKIQVPGQTLPPESIVQEFIDTVKEFTEKCPGMLVGVHCTHGINRTGYMVCRYLMHTLGIAPQEAIDRFEKARGHKIERQNYVQDLLI.

A Tyrosine-protein phosphatase domain is found at 24 to 168 (FKTPLRPELF…RQNYVQDLLI (145 aa)). C119 functions as the Phosphocysteine intermediate in the catalytic mechanism.

It belongs to the protein-tyrosine phosphatase family. Non-receptor class CDC14 subfamily.

It catalyses the reaction O-phospho-L-tyrosyl-[protein] + H2O = L-tyrosyl-[protein] + phosphate. Functionally, plays a role in the regulation and processing of late viral mRNAs by displaying RNA 5'-triphosphatase and diphosphatase activities. In Autographa californica nuclear polyhedrosis virus (AcMNPV), this protein is Tyrosine-protein phosphatase (PTP).